The following is a 282-amino-acid chain: Ribosome biogenesis GTPase A (282 aa).

A CP-type G domain is found at 14–178 (RREVTEKLKL…LLDTPGILWP (165 aa)). GTP is bound by residues 58-61 (NKAD), 86-87 (NS), 130-135 (NVGKST), and glycine 174.

The protein belongs to the TRAFAC class YlqF/YawG GTPase family. MTG1 subfamily. In terms of assembly, interacts with ctc. Interacts with the immature 50S ribosome subunit. 2 molecules of rbgA bind to one 50S subunit.

The protein localises to the cytoplasm. In terms of biological role, essential protein that is required for a late step of 50S ribosomal subunit assembly. Has GTPase activity that is stimulated by interaction with the immature 50S ribosome subunit. Binds to the 23S rRNA. Required for the association of ribosomal proteins rplP and rpmA with the large subunit. The sequence is that of Ribosome biogenesis GTPase A (rbgA) from Bacillus spizizenii (strain ATCC 23059 / NRRL B-14472 / W23) (Bacillus subtilis subsp. spizizenii).